The primary structure comprises 671 residues: DNA ligase (671 aa).

NAD(+) contacts are provided by residues 32–36, 81–82, and Glu113; these read DAEYD and SL. The active-site N6-AMP-lysine intermediate is Lys115. The NAD(+) site is built by Arg136, Glu173, Lys290, and Lys314. Residues Cys408, Cys411, Cys426, and Cys432 each contribute to the Zn(2+) site. One can recognise a BRCT domain in the interval 593–671; sequence EIDSPFAGKT…ETEMLRLLGS (79 aa).

It belongs to the NAD-dependent DNA ligase family. LigA subfamily. The cofactor is Mg(2+). Mn(2+) is required as a cofactor.

The catalysed reaction is NAD(+) + (deoxyribonucleotide)n-3'-hydroxyl + 5'-phospho-(deoxyribonucleotide)m = (deoxyribonucleotide)n+m + AMP + beta-nicotinamide D-nucleotide.. Functionally, DNA ligase that catalyzes the formation of phosphodiester linkages between 5'-phosphoryl and 3'-hydroxyl groups in double-stranded DNA using NAD as a coenzyme and as the energy source for the reaction. It is essential for DNA replication and repair of damaged DNA. This chain is DNA ligase, found in Escherichia coli O6:H1 (strain CFT073 / ATCC 700928 / UPEC).